The following is a 114-amino-acid chain: uncharacterized protein (114 aa).

The region spanning 6–114 is the HIT domain; it reads IFGKIIRREI…GGRSLAWPPG (109 aa). The Histidine triad motif signature appears at 98-102; the sequence is HLHIH.

This is an uncharacterized protein from Synechococcus elongatus (strain ATCC 33912 / PCC 7942 / FACHB-805) (Anacystis nidulans R2).